Here is a 281-residue protein sequence, read N- to C-terminus: tRNA dimethylallyltransferase (281 aa).

Interaction with substrate tRNA regions lie at residues 13-16 and 133-137; these read DSAQ and QRITR.

Belongs to the IPP transferase family. Monomer. Requires Mg(2+) as cofactor.

The enzyme catalyses adenosine(37) in tRNA + dimethylallyl diphosphate = N(6)-dimethylallyladenosine(37) in tRNA + diphosphate. Catalyzes the transfer of a dimethylallyl group onto the adenine at position 37 in tRNAs that read codons beginning with uridine, leading to the formation of N6-(dimethylallyl)adenosine (i(6)A). The chain is tRNA dimethylallyltransferase from Novosphingobium aromaticivorans (strain ATCC 700278 / DSM 12444 / CCUG 56034 / CIP 105152 / NBRC 16084 / F199).